The chain runs to 493 residues: MAKELKELTPRSVNYSQWYQDLVIKADLAENSAVRGCMVIKPYGYAIWEKMQRILDDMFKETGHVNAYFPLLIPKSFLSKEAEHVEGFAKECAVVTHYRLKTNHDGTGVVVDPAAKLEEELIIRPTSETIIWNTYRNWIQSYRDLPILCNQWANVMRWEMRTRLFLRTAEFLWQEGHTAHATREEAEIEAKKMQDVYANFAENYMAMPVIKGVKSESERFAGALDTYTIEAMMQDGKALQAGTSHFLGQNFGKAFDVTFIDKNGKSDYAWATSWGVSTRLIGALIMSHSDDNGLVLPPHLAPIQVVIVPIYRSAEQLTQISEKVAGIVAKLKALGISVKYDDADNKKPGWKFAEYELKGVPVRLAMGGRDLENNTIEVMRRDTLEKETITCDGIEEYVKNLLEEIQANIFKKAYDHREANIINVDTYEEFKEKIEDGVFIMAHWDGTPETEELIKNETKATIRCIPLAGDKTPGKCMVTGKPSACRVLFARAY.

This sequence belongs to the class-II aminoacyl-tRNA synthetase family. ProS type 3 subfamily. In terms of assembly, homodimer.

It localises to the cytoplasm. It catalyses the reaction tRNA(Pro) + L-proline + ATP = L-prolyl-tRNA(Pro) + AMP + diphosphate. Functionally, catalyzes the attachment of proline to tRNA(Pro) in a two-step reaction: proline is first activated by ATP to form Pro-AMP and then transferred to the acceptor end of tRNA(Pro). This chain is Proline--tRNA ligase, found in Parabacteroides distasonis (strain ATCC 8503 / DSM 20701 / CIP 104284 / JCM 5825 / NCTC 11152).